The following is a 333-amino-acid chain: Taste receptor type 2 member 38 (333 aa).

The Extracellular portion of the chain corresponds to 1 to 17; that stretch reads MLTLTRICAVSYEVRST. Residues 18-38 traverse the membrane as a helical segment; it reads FLFISVLEFAVGFLTNAFIFL. Topologically, residues 39 to 55 are cytoplasmic; sequence VNFWDVVKRQPLSNSDC. A helical transmembrane segment spans residues 56 to 76; sequence VLLCLSISRLFLHGLLFLSAI. The Extracellular portion of the chain corresponds to 77-94; sequence QLTHFQKLSEPLNHSYQA. The chain crosses the membrane as a helical span at residues 95–115; it reads IIMLWIIANQANLWLAACLSL. The Cytoplasmic segment spans residues 116–142; the sequence is LYCSKLIRFSHTFLICLASWVSRKISQ. Residues 143–163 traverse the membrane as a helical segment; sequence MLLGIILCSCICTVLCVWCFF. At 164-190 the chain is on the extracellular side; sequence SRPHFTVTTFLFMNNNTRLNWQIKDLN. N-linked (GlcNAc...) asparagine glycosylation occurs at Asn-178. A helical membrane pass occupies residues 191-211; it reads LFYSFLFCYLWSVPPFLLFLV. At 212–251 the chain is on the cytoplasmic side; the sequence is SSGMLTVSLGRHMRTMKVYTRDSRDPSLEAHIKALKSLVS. The helical transmembrane segment at 252–272 threads the bilayer; it reads FFCFFVISSCAAFISVPLLIL. Residues 273-276 are Extracellular-facing; that stretch reads WRNK. The chain crosses the membrane as a helical span at residues 277 to 297; sequence IGVMVCVGIMAACPSGHAAVL. Over 298–333 the chain is Cytoplasmic; the sequence is ISGNATLRRAVTTILLWAQSSMKVRADHKADSRTLC.

It belongs to the G-protein coupled receptor T2R family.

It localises to the membrane. Its function is as follows. Receptor that may play a role in the perception of bitterness and is gustducin-linked. May play a role in sensing the chemical composition of the gastrointestinal content. The activity of this receptor may stimulate alpha gustducin, mediate PLC-beta-2 activation and lead to the gating of TRPM5. This chain is Taste receptor type 2 member 38 (TAS2R38), found in Pongo pygmaeus (Bornean orangutan).